A 192-amino-acid polypeptide reads, in one-letter code: UPF0149 protein YgfB (192 aa).

Belongs to the UPF0149 family.

This Salmonella agona (strain SL483) protein is UPF0149 protein YgfB.